A 464-amino-acid chain; its full sequence is ATP synthase subunit beta (464 aa).

ATP is bound at residue glycine 153–threonine 160.

Belongs to the ATPase alpha/beta chains family. F-type ATPases have 2 components, CF(1) - the catalytic core - and CF(0) - the membrane proton channel. CF(1) has five subunits: alpha(3), beta(3), gamma(1), delta(1), epsilon(1). CF(0) has three main subunits: a(1), b(2) and c(9-12). The alpha and beta chains form an alternating ring which encloses part of the gamma chain. CF(1) is attached to CF(0) by a central stalk formed by the gamma and epsilon chains, while a peripheral stalk is formed by the delta and b chains.

It is found in the cell inner membrane. It catalyses the reaction ATP + H2O + 4 H(+)(in) = ADP + phosphate + 5 H(+)(out). Functionally, produces ATP from ADP in the presence of a proton gradient across the membrane. The catalytic sites are hosted primarily by the beta subunits. This is ATP synthase subunit beta from Burkholderia lata (strain ATCC 17760 / DSM 23089 / LMG 22485 / NCIMB 9086 / R18194 / 383).